The following is a 336-amino-acid chain: Phosphate acyltransferase (336 aa).

This sequence belongs to the PlsX family. Homodimer. Probably interacts with PlsY.

It is found in the cytoplasm. The catalysed reaction is a fatty acyl-[ACP] + phosphate = an acyl phosphate + holo-[ACP]. Its pathway is lipid metabolism; phospholipid metabolism. Catalyzes the reversible formation of acyl-phosphate (acyl-PO(4)) from acyl-[acyl-carrier-protein] (acyl-ACP). This enzyme utilizes acyl-ACP as fatty acyl donor, but not acyl-CoA. The sequence is that of Phosphate acyltransferase from Ectopseudomonas mendocina (strain ymp) (Pseudomonas mendocina).